The sequence spans 404 residues: Cysteine desulfurase IscS (404 aa).

Pyridoxal 5'-phosphate is bound by residues alanine 75–threonine 76, asparagine 155, glutamine 183, and serine 203–histidine 205. Lysine 206 is modified (N6-(pyridoxal phosphate)lysine). Threonine 243 lines the pyridoxal 5'-phosphate pocket. The active-site Cysteine persulfide intermediate is the cysteine 328. A [2Fe-2S] cluster-binding site is contributed by cysteine 328.

Belongs to the class-V pyridoxal-phosphate-dependent aminotransferase family. NifS/IscS subfamily. Homodimer. Forms a heterotetramer with IscU, interacts with other sulfur acceptors. Pyridoxal 5'-phosphate serves as cofactor.

It localises to the cytoplasm. The catalysed reaction is (sulfur carrier)-H + L-cysteine = (sulfur carrier)-SH + L-alanine. Its pathway is cofactor biosynthesis; iron-sulfur cluster biosynthesis. Functionally, master enzyme that delivers sulfur to a number of partners involved in Fe-S cluster assembly, tRNA modification or cofactor biosynthesis. Catalyzes the removal of elemental sulfur atoms from cysteine to produce alanine. Functions as a sulfur delivery protein for Fe-S cluster synthesis onto IscU, an Fe-S scaffold assembly protein, as well as other S acceptor proteins. The chain is Cysteine desulfurase IscS from Haemophilus influenzae (strain PittEE).